Consider the following 236-residue polypeptide: Small ribosomal subunit protein uS3 (236 aa).

The KH type-2 domain maps to 39-107 (IREILHKELK…DVVINIVEIR (69 aa)). A disordered region spans residues 213–236 (MAQDKRMNEGGGESSQPRSRRDAA).

Belongs to the universal ribosomal protein uS3 family. In terms of assembly, part of the 30S ribosomal subunit. Forms a tight complex with proteins S10 and S14.

Binds the lower part of the 30S subunit head. Binds mRNA in the 70S ribosome, positioning it for translation. This is Small ribosomal subunit protein uS3 from Bradyrhizobium sp. (strain BTAi1 / ATCC BAA-1182).